Consider the following 352-residue polypeptide: Beta-1,4-xylanase (352 aa).

A signal peptide spans 1-23; sequence MINQRFSILVLLLILLTFSLGFL. The GH10 domain maps to 29–352; it reads GMEIPSLKEV…KKAFWEIVKF (324 aa). Catalysis depends on E155, which acts as the Proton donor. E262 serves as the catalytic Nucleophile.

The protein belongs to the glycosyl hydrolase 10 (cellulase F) family.

It localises to the secreted. The catalysed reaction is Endohydrolysis of (1-&gt;4)-beta-D-xylosidic linkages in xylans.. It participates in glycan degradation; xylan degradation. In Dictyoglomus thermophilum, this protein is Beta-1,4-xylanase (xynA).